Reading from the N-terminus, the 665-residue chain is Potassium-transporting ATPase ATP-binding subunit (665 aa).

Helical transmembrane passes span 28-48, 56-76, 207-227, and 244-264; these read MFLT…PGFF, YLQF…FSSM, IALT…TASI, and IVLL…AIGI. The active-site 4-aspartylphosphate intermediate is the Asp295. ATP is bound by residues Asp332, Glu336, 364 to 371, and Lys382; that span reads FSSETKYS. Asp501 and Asp505 together coordinate Mg(2+). 3 helical membrane passes run 570–590, 596–616, and 644–664; these read YFVI…VNVL, IVAV…LIPL, and VVVP…LGVV.

The protein belongs to the cation transport ATPase (P-type) (TC 3.A.3) family. Type IA subfamily. The system is composed of three essential subunits: KdpA, KdpB and KdpC.

It localises to the cell membrane. The enzyme catalyses K(+)(out) + ATP + H2O = K(+)(in) + ADP + phosphate + H(+). Its function is as follows. Part of the high-affinity ATP-driven potassium transport (or Kdp) system, which catalyzes the hydrolysis of ATP coupled with the electrogenic transport of potassium into the cytoplasm. This subunit is responsible for energy coupling to the transport system and for the release of the potassium ions to the cytoplasm. This Thermoplasma acidophilum (strain ATCC 25905 / DSM 1728 / JCM 9062 / NBRC 15155 / AMRC-C165) protein is Potassium-transporting ATPase ATP-binding subunit.